Reading from the N-terminus, the 96-residue chain is Putative regulatory protein DET0036 (96 aa).

This sequence belongs to the RemA family.

The chain is Putative regulatory protein DET0036 from Dehalococcoides mccartyi (strain ATCC BAA-2266 / KCTC 15142 / 195) (Dehalococcoides ethenogenes (strain 195)).